A 299-amino-acid polypeptide reads, in one-letter code: Oxygen-dependent coproporphyrinogen-III oxidase (299 aa).

Ser-92 is a substrate binding site. His-96 and His-106 together coordinate a divalent metal cation. The Proton donor role is filled by His-106. A substrate-binding site is contributed by 108 to 110 (NVR). A divalent metal cation-binding residues include His-145 and His-175. Residues 240–275 (YVEFNLVWDRGTLFGLQTGGRTESILMSMPPLVRWE) form an important for dimerization region. Residue 258-260 (GGR) participates in substrate binding.

This sequence belongs to the aerobic coproporphyrinogen-III oxidase family. Homodimer. It depends on a divalent metal cation as a cofactor.

Its subcellular location is the cytoplasm. It carries out the reaction coproporphyrinogen III + O2 + 2 H(+) = protoporphyrinogen IX + 2 CO2 + 2 H2O. Its pathway is porphyrin-containing compound metabolism; protoporphyrin-IX biosynthesis; protoporphyrinogen-IX from coproporphyrinogen-III (O2 route): step 1/1. Its function is as follows. Involved in the heme biosynthesis. Catalyzes the aerobic oxidative decarboxylation of propionate groups of rings A and B of coproporphyrinogen-III to yield the vinyl groups in protoporphyrinogen-IX. The chain is Oxygen-dependent coproporphyrinogen-III oxidase from Salmonella dublin (strain CT_02021853).